The primary structure comprises 570 residues: Proline--tRNA ligase (570 aa).

This sequence belongs to the class-II aminoacyl-tRNA synthetase family. ProS type 1 subfamily. Homodimer.

It is found in the cytoplasm. The enzyme catalyses tRNA(Pro) + L-proline + ATP = L-prolyl-tRNA(Pro) + AMP + diphosphate. Functionally, catalyzes the attachment of proline to tRNA(Pro) in a two-step reaction: proline is first activated by ATP to form Pro-AMP and then transferred to the acceptor end of tRNA(Pro). As ProRS can inadvertently accommodate and process non-cognate amino acids such as alanine and cysteine, to avoid such errors it has two additional distinct editing activities against alanine. One activity is designated as 'pretransfer' editing and involves the tRNA(Pro)-independent hydrolysis of activated Ala-AMP. The other activity is designated 'posttransfer' editing and involves deacylation of mischarged Ala-tRNA(Pro). The misacylated Cys-tRNA(Pro) is not edited by ProRS. This chain is Proline--tRNA ligase, found in Neisseria meningitidis serogroup B (strain ATCC BAA-335 / MC58).